The chain runs to 194 residues: Small ribosomal subunit protein uS4c (194 aa).

In terms of domain architecture, S4 RNA-binding spans 84-144 (MRLDTLLYRT…KEILKSLNDK (61 aa)).

Belongs to the universal ribosomal protein uS4 family. Part of the 30S ribosomal subunit. Contacts protein S5. The interaction surface between S4 and S5 is involved in control of translational fidelity.

The protein resides in the plastid. Its subcellular location is the chloroplast. Its function is as follows. One of the primary rRNA binding proteins, it binds directly to 16S rRNA where it nucleates assembly of the body of the 30S subunit. Functionally, with S5 and S12 plays an important role in translational accuracy. The sequence is that of Small ribosomal subunit protein uS4c (rps4) from Bigelowiella natans (Pedinomonas minutissima).